Reading from the N-terminus, the 85-residue chain is Large ribosomal subunit protein bL27 (85 aa).

The segment at 1–20 is disordered; the sequence is MATKKAGGSTKNGRDSNPKM.

Belongs to the bacterial ribosomal protein bL27 family.

This Acinetobacter baumannii (strain AB307-0294) protein is Large ribosomal subunit protein bL27.